Here is a 36-residue protein sequence, read N- to C-terminus: Photosystem II reaction center protein M (36 aa).

Residue Met-1 is modified to Blocked amino end (Met). Residues Met-1–Thr-11 lie on the Lumenal side of the membrane. Residues Ala-12–Val-27 traverse the membrane as a helical segment. Topologically, residues Gln-28–Ser-36 are cytoplasmic.

It belongs to the PsbM family. As to quaternary structure, PSII is composed of 1 copy each of membrane proteins PsbA, PsbB, PsbC, PsbD, PsbE, PsbF, PsbH, PsbI, PsbJ, PsbK, PsbL, PsbM, PsbT, PsbX, PsbY, PsbZ, Psb30/Ycf12, peripheral proteins PsbO, CyanoQ (PsbQ), PsbU, PsbV, PsbU, PsbV and a large number of cofactors. It forms dimeric complexes. The cofactor is PSII binds multiple chlorophylls, carotenoids and specific lipids..

It is found in the cellular thylakoid membrane. Functionally, one of the components of the core complex of photosystem II (PSII). PSII is a light-driven water:plastoquinone oxidoreductase that uses light energy to abstract electrons from H(2)O, generating O(2) and a proton gradient subsequently used for ATP formation. It consists of a core antenna complex that captures photons, and an electron transfer chain that converts photonic excitation into a charge separation. This subunit is found at the monomer-monomer interface. Probably involved in dimerization of PSII; at the monomer-monomer interface the only protein-protein contacts observed are between the 2 PsbM subunits. Lipids, chlorophylls and carotenoids contribute strongly to PSII dimerization. This is Photosystem II reaction center protein M from Thermostichus vulcanus (Synechococcus vulcanus).